Consider the following 94-residue polypeptide: Phosphoribosyl-ATP pyrophosphatase (94 aa).

It belongs to the PRA-PH family.

The protein resides in the cytoplasm. The catalysed reaction is 1-(5-phospho-beta-D-ribosyl)-ATP + H2O = 1-(5-phospho-beta-D-ribosyl)-5'-AMP + diphosphate + H(+). Its pathway is amino-acid biosynthesis; L-histidine biosynthesis; L-histidine from 5-phospho-alpha-D-ribose 1-diphosphate: step 2/9. The protein is Phosphoribosyl-ATP pyrophosphatase (hisE) of Saccharolobus solfataricus (strain ATCC 35092 / DSM 1617 / JCM 11322 / P2) (Sulfolobus solfataricus).